A 504-amino-acid chain; its full sequence is Deoxyguanosinetriphosphate triphosphohydrolase (504 aa).

The HD domain occupies 66 to 273; the sequence is RLTHSLEVQQ…MEAADDISYC (208 aa).

It belongs to the dGTPase family. Type 1 subfamily. In terms of assembly, homotetramer. Mg(2+) is required as a cofactor.

It carries out the reaction dGTP + H2O = 2'-deoxyguanosine + triphosphate + H(+). Its function is as follows. dGTPase preferentially hydrolyzes dGTP over the other canonical NTPs. This Cronobacter sakazakii (strain ATCC BAA-894) (Enterobacter sakazakii) protein is Deoxyguanosinetriphosphate triphosphohydrolase.